The sequence spans 457 residues: B-cell linker protein (457 aa).

The segment at 38-306 (KLKVKGPPSV…FPPTQKPVLQ (269 aa)) is disordered. Positions 57–74 (PADEEEQWSDDFDSDYEN) are enriched in acidic residues. 5 positions are modified to phosphotyrosine; by SYK: tyrosine 72, tyrosine 84, tyrosine 96, tyrosine 178, and tyrosine 189. Positions 172–187 (LEDEADYVVPVEDNDE) are enriched in acidic residues. Composition is skewed to polar residues over residues 206–218 (VNRSTKPNSSSKH) and 256–270 (PLKTTPVPSLQNASN). The segment covering 272 to 290 (CEEKPVPAERHRGSSHRQD) has biased composition (basic and acidic residues). Positions 347 to 454 (WYAGACDRKS…KDSTRLKYAV (108 aa)) constitute an SH2 domain.

As to quaternary structure, associates with PLCG1, VAV1 and NCK1 in a B-cell antigen receptor-dependent fashion. Interacts with VAV3, PLCG2 and GRB2. Interacts through its SH2 domain with CD79A. Interacts (via SH2 domain) with SYK; phosphorylated and activated by SYK. Interacts (via SH2 domain) with SCIMP; this interaction is dependent on phosphorylation of SCIMP 'Tyr-120'. Post-translationally, following BCR activation, phosphorylated on tyrosine residues by SYK and LYN. When phosphorylated, serves as a scaffold to assemble downstream targets of antigen activation, including PLCG1, VAV1, GRB2 and NCK1. Phosphorylation of Tyr-84, Tyr-178 and Tyr-189 facilitates PLCG1 binding. Phosphorylation of Tyr-96 facilitates BTK binding. Phosphorylation of Tyr-72 facilitates VAV1 and NCK1 binding. Phosphorylation is required for both Ca(2+) and MAPK signaling pathways.

The protein localises to the cytoplasm. Its subcellular location is the cell membrane. Functions as a central linker protein, downstream of the B-cell receptor (BCR), bridging the SYK kinase to a multitude of signaling pathways and regulating biological outcomes of B-cell function and development. Plays a role in the activation of ERK/EPHB2, MAP kinase p38 and JNK. Modulates AP1 activation. Important for the activation of NF-kappa-B and NFAT. Plays an important role in BCR-mediated PLCG1 and PLCG2 activation and Ca(2+) mobilization and is required for trafficking of the BCR to late endosomes. However, does not seem to be required for pre-BCR-mediated activation of MAP kinase and phosphatidyl-inositol 3 (PI3) kinase signaling. May be required for the RAC1-JNK pathway. Plays a critical role in orchestrating the pro-B cell to pre-B cell transition. May play an important role in BCR-induced B-cell apoptosis. This Rattus norvegicus (Rat) protein is B-cell linker protein (Blnk).